Here is a 369-residue protein sequence, read N- to C-terminus: MDSVSLSEVTVIKGTTHLGFMHSFRQPFCGVKISPKFYLSKVDGPKAISSSSNTKSQFVYGGGSIAATSDSGYKMNGVNLKSRTLMSSAVKERSLLDAYDDEYGGVIVDHGKLPSNPYAFASMLRASLSDWRRKGKKGVWLKLPVEQSELVPIAIKEGFEYHHAEKGYVMLTYWIPEEEPSMLPANASHQVGVGGFVLNQHKEVLVVQEKYCAPSITGLWKLPTGFINESEEIFSGAVREVKEETGVDTEFSEVIAFRHAHNVAFEKSDLFFICMLRPLSDKIIIDALEIKAAKWMPLAEFVEQPMIRGDKMFKRVIEICEARLSHRYCGLSPHRLVSTFDGKPSSLYYNVVDDDHDPSHSNCSTEFYR.

One can recognise a Nudix hydrolase domain in the interval 188-318 (SHQVGVGGFV…GDKMFKRVIE (131 aa)). A Nudix box motif is present at residues 225-246 (GFINESEEIFSGAVREVKEETG). Mg(2+) contacts are provided by Glu240 and Glu244.

Belongs to the Nudix hydrolase family. The cofactor is Mg(2+). It depends on Mn(2+) as a cofactor. Expressed in roots, stems and, at lower level, leaves.

Its function is as follows. Probably mediates the hydrolysis of some nucleoside diphosphate derivatives. May be involved in plant immunity and act as a positive regulator of defense response through salicylic acid (SA) signaling. The protein is Nudix hydrolase 8 (NUDT8) of Arabidopsis thaliana (Mouse-ear cress).